The sequence spans 92 residues: Small ribosomal subunit protein uS17 (92 aa).

It belongs to the universal ribosomal protein uS17 family. As to quaternary structure, part of the 30S ribosomal subunit.

In terms of biological role, one of the primary rRNA binding proteins, it binds specifically to the 5'-end of 16S ribosomal RNA. This Cupriavidus metallidurans (strain ATCC 43123 / DSM 2839 / NBRC 102507 / CH34) (Ralstonia metallidurans) protein is Small ribosomal subunit protein uS17.